The primary structure comprises 104 residues: Phosphoribosyl-ATP pyrophosphatase (104 aa).

It belongs to the PRA-PH family.

The protein localises to the cytoplasm. The catalysed reaction is 1-(5-phospho-beta-D-ribosyl)-ATP + H2O = 1-(5-phospho-beta-D-ribosyl)-5'-AMP + diphosphate + H(+). It functions in the pathway amino-acid biosynthesis; L-histidine biosynthesis; L-histidine from 5-phospho-alpha-D-ribose 1-diphosphate: step 2/9. In Streptococcus thermophilus (strain ATCC BAA-491 / LMD-9), this protein is Phosphoribosyl-ATP pyrophosphatase.